The primary structure comprises 151 residues: Ribosomal RNA large subunit methyltransferase H (151 aa).

S-adenosyl-L-methionine contacts are provided by residues L73, G100, and 119–124 (LTKLTL).

Belongs to the RNA methyltransferase RlmH family. In terms of assembly, homodimer.

Its subcellular location is the cytoplasm. The catalysed reaction is pseudouridine(1915) in 23S rRNA + S-adenosyl-L-methionine = N(3)-methylpseudouridine(1915) in 23S rRNA + S-adenosyl-L-homocysteine + H(+). Its function is as follows. Specifically methylates the pseudouridine at position 1915 (m3Psi1915) in 23S rRNA. This chain is Ribosomal RNA large subunit methyltransferase H, found in Campylobacter hominis (strain ATCC BAA-381 / DSM 21671 / CCUG 45161 / LMG 19568 / NCTC 13146 / CH001A).